The primary structure comprises 631 residues: Glutamyl-tRNA(Gln) amidotransferase subunit E (631 aa).

The protein belongs to the GatB/GatE family. GatE subfamily. Heterodimer of GatD and GatE.

It catalyses the reaction L-glutamyl-tRNA(Gln) + L-glutamine + ATP + H2O = L-glutaminyl-tRNA(Gln) + L-glutamate + ADP + phosphate + H(+). Its function is as follows. Allows the formation of correctly charged Gln-tRNA(Gln) through the transamidation of misacylated Glu-tRNA(Gln) in organisms which lack glutaminyl-tRNA synthetase. The reaction takes place in the presence of glutamine and ATP through an activated gamma-phospho-Glu-tRNA(Gln). The GatDE system is specific for glutamate and does not act on aspartate. The chain is Glutamyl-tRNA(Gln) amidotransferase subunit E from Methanococcus maripaludis (strain C7 / ATCC BAA-1331).